A 302-amino-acid chain; its full sequence is Vomeronasal type-1 receptor 48 (302 aa).

Residues 1–16 (MNENSRLHTHSNIRNT) are Extracellular-facing. The helical transmembrane segment at 17–37 (FFSEIGIGISGNSFLLLFHII) threads the bilayer. Residues 38 to 49 (KFFRGHRPRLTD) lie on the Cytoplasmic side of the membrane. A helical membrane pass occupies residues 50 to 70 (LPIGLLSLIHLLMLLVAAVIA). Topologically, residues 71 to 91 (TDIFISWRGWNDIICKFLVYL) are extracellular. Residues C85 and C172 are joined by a disulfide bond. A helical transmembrane segment spans residues 92 to 114 (YRSLRGLSLCTTSMLSVLQAIIL). The Cytoplasmic portion of the chain corresponds to 115-131 (SPRSYCLAKFKRKSSHN). A helical membrane pass occupies residues 132–152 (ISCAIIFLSVLYMSISSHLLI). Residues 153 to 193 (SITATPNLTMNDFLYVSQSCSLLPLSYLMQSIYSTLLVLRE) lie on the Extracellular side of the membrane. N159 carries an N-linked (GlcNAc...) asparagine glycan. Residues 194 to 214 (VFLIGLMVLSTSYMVALLYMH) traverse the membrane as a helical segment. Residues 215 to 238 (RKQAQNLQGTSLSLKASAEQRATQ) lie on the Cytoplasmic side of the membrane. A helical transmembrane segment spans residues 239–259 (TILMLMTFFVLMSIFDSIVSC). At 260–269 (SRTMFLDDPT) the chain is on the extracellular side. Residues 270–290 (SYSIHIFVMHIYATVSPFVFI) traverse the membrane as a helical segment. The Cytoplasmic segment spans residues 291 to 302 (STEKHIVNILRG).

The protein belongs to the G-protein coupled receptor 1 family.

The protein resides in the cell membrane. Functionally, putative pheromone receptor implicated in the regulation of social and reproductive behavior. This is Vomeronasal type-1 receptor 48 (Vmn1r48) from Mus musculus (Mouse).